Reading from the N-terminus, the 594-residue chain is SHC-transforming protein 3 (594 aa).

The tract at residues 98-147 (GSCSAPSLAAPDGSAPSAPRAPAMSAARKGRPGDEPLPRPPRGAPHASDQ) is disordered. The segment covering 101–124 (SAPSLAAPDGSAPSAPRAPAMSAA) has biased composition (low complexity). Residues 149–334 (LGPGVTYVVK…LDEPWTEEEG (186 aa)) form the PID domain. The interval 335–498 (DGSDHPYYNS…KMLEELQAET (164 aa)) is CH1. Disordered regions lie at residues 351–373 (PPGG…AQFA) and 386–405 (GDTF…SSDI). Polar residues predominate over residues 393-405 (WQQTPLRQGSSDI). Residue Ser402 is modified to Phosphoserine. The SH2 domain occupies 499–590 (WYQGEMSRKE…GSELCLQQPV (92 aa)).

Interacts with the Trk receptors in a phosphotyrosine-dependent manner. Once activated, binds to GRB2. Interacts with activated EGF receptors. Tyrosine phosphorylated. In terms of tissue distribution, mainly expressed in brain. Hardly detectable in other tissues, except in pancreas. Highly expressed in the cerebral cortex, frontal and temporal lobes, occipital pole, hippocampus, caudate nucleus and amygdala. Expressed at low level in the cerebellum, medulla and spinal cord.

In terms of biological role, signaling adapter that couples activated growth factor receptors to signaling pathway in neurons. Involved in the signal transduction pathways of neurotrophin-activated Trk receptors in cortical neurons. The sequence is that of SHC-transforming protein 3 (SHC3) from Homo sapiens (Human).